Here is an 86-residue protein sequence, read N- to C-terminus: Cell division topological specificity factor (86 aa).

This sequence belongs to the MinE family.

Its function is as follows. Prevents the cell division inhibition by proteins MinC and MinD at internal division sites while permitting inhibition at polar sites. This ensures cell division at the proper site by restricting the formation of a division septum at the midpoint of the long axis of the cell. The sequence is that of Cell division topological specificity factor from Shewanella piezotolerans (strain WP3 / JCM 13877).